The primary structure comprises 257 residues: MRILLTNDDGIFAPGLEALRNALSDLAETIYIIAPDRERSATGHSITVHRPIRVREACHADGNCCGWIVDGTPADCVKLALESLLPETPDLVISGINLGPNLGTDVLYSGTVSAAMEGLINGVPSLAISLASHREAEFEEAAAFARRLLPLVFEYREIFTANTLLNINVPPGKPVGVRLTRLGNLRYADAVDRRVDPRGRYYYWMAGKPFSPDGHDPDTDIGAVKDRHISITPVKIDLTDYEALDALKKWPVDWKGS.

The a divalent metal cation site is built by D8, D9, S40, and N97.

Belongs to the SurE nucleotidase family. The cofactor is a divalent metal cation.

Its subcellular location is the cytoplasm. It catalyses the reaction a ribonucleoside 5'-phosphate + H2O = a ribonucleoside + phosphate. In terms of biological role, nucleotidase that shows phosphatase activity on nucleoside 5'-monophosphates. The polypeptide is 5'-nucleotidase SurE (Desulforudis audaxviator (strain MP104C)).